Reading from the N-terminus, the 88-residue chain is Large ribosomal subunit protein bL27 (88 aa).

It belongs to the bacterial ribosomal protein bL27 family.

This is Large ribosomal subunit protein bL27 from Acidobacterium capsulatum (strain ATCC 51196 / DSM 11244 / BCRC 80197 / JCM 7670 / NBRC 15755 / NCIMB 13165 / 161).